The primary structure comprises 377 residues: MSCPYAGNSNEHDDAAVPLSNDVGKIYGEYLMLDKLLDAQCMLSMEDKRPVHDEHLFIITHQAYELWFKQIIFEFDSIRDMLDAEVIDETKTLEIVKRLNRVVLILKLLVDQVPILETMTPLDFMDFRKYLAPASGFQSLQFRLIENKLGVLTEQRVKYNQKYSDVFGNDERALNAIRSSEDNPSLLELVQRWLERTPGLEADGFNFWEKFQHSVDQFLAAQVHSALLEPVEQAKNYRLMDIEKRREVYRSIFDPALHEALVKRGDRRFSHGALQGAIMITFYRDEPRFSQPHQLLTLLMDIDSLITKWRYNHVIMVQRMIGSQQLGTGGSSGYQYLRSTLSDRYKVFLDLFNLSTFLIPREAIPPLDESIRQKLIH.

Substrate-binding positions include 57-61 (FIITH) and Arg-128. His-313 is a binding site for heme. Thr-328 is a binding site for substrate.

It belongs to the tryptophan 2,3-dioxygenase family. As to quaternary structure, homotetramer. Dimer of dimers. Heme serves as cofactor.

It catalyses the reaction L-tryptophan + O2 = N-formyl-L-kynurenine. It functions in the pathway amino-acid degradation; L-tryptophan degradation via kynurenine pathway; L-kynurenine from L-tryptophan: step 1/2. Its pathway is pigment biosynthesis; ommochrome biosynthesis. Its function is as follows. Heme-dependent dioxygenase that catalyzes the oxidative cleavage of the L-tryptophan (L-Trp) pyrrole ring and converts L-tryptophan to N-formyl-L-kynurenine. Catalyzes the oxidative cleavage of the indole moiety. The chain is Tryptophan 2,3-dioxygenase from Drosophila grimshawi (Hawaiian fruit fly).